We begin with the raw amino-acid sequence, 321 residues long: Glucokinase (321 aa).

8–13 (GDVGGT) is a binding site for ATP.

The protein belongs to the bacterial glucokinase family.

It is found in the cytoplasm. It carries out the reaction D-glucose + ATP = D-glucose 6-phosphate + ADP + H(+). The polypeptide is Glucokinase (Psychromonas ingrahamii (strain DSM 17664 / CCUG 51855 / 37)).